Reading from the N-terminus, the 194-residue chain is NADPH-flavin oxidoreductase (194 aa).

Belongs to the non-flavoprotein flavin reductase family. In terms of assembly, homodimer. It can form an isobutylamine N-hydroxylase two component enzyme system formed of a flavin reductase component (VlmR) and a monooxygenase component (VlmH).

It catalyses the reaction FADH2 + NADP(+) = FAD + NADPH + 2 H(+). It carries out the reaction FMNH2 + NADP(+) = FMN + NADPH + 2 H(+). Functionally, involved in the biosynthesis of the azoxy antibiotic valanimycin, which has an antitumor activity. Catalyzes the reduction of FAD/FMN to FADH(2)/FMNH(2) which are subsequently used for the hydroxylation of isobutylamine by the isobutylamine N-hydroxylase VlmH. It can reduce either FAD or flavin mononucleotide (FMN) but prefers FAD. The enzyme has a strong preference for NADPH as acceptor. This chain is NADPH-flavin oxidoreductase, found in Streptomyces viridifaciens.